The sequence spans 180 residues: Hypoxanthine-guanine phosphoribosyltransferase (180 aa).

Positions 43 and 44 each coordinate diphosphate. Residues E99 and D100 each coordinate Mg(2+). D103 serves as the catalytic Proton acceptor. GMP is bound by residues K131, 152-153 (FI), and D159. A diphosphate-binding site is contributed by R165.

The protein belongs to the purine/pyrimidine phosphoribosyltransferase family. The cofactor is Mg(2+).

Its subcellular location is the cytoplasm. It carries out the reaction IMP + diphosphate = hypoxanthine + 5-phospho-alpha-D-ribose 1-diphosphate. The enzyme catalyses GMP + diphosphate = guanine + 5-phospho-alpha-D-ribose 1-diphosphate. The protein operates within purine metabolism; IMP biosynthesis via salvage pathway; IMP from hypoxanthine: step 1/1. It functions in the pathway purine metabolism; GMP biosynthesis via salvage pathway; GMP from guanine: step 1/1. Functionally, purine salvage pathway enzyme that catalyzes the transfer of the ribosyl-5-phosphate group from 5-phospho-alpha-D-ribose 1-diphosphate (PRPP) to the N9 position of the 6-oxopurines hypoxanthine and guanine to form the corresponding ribonucleotides IMP (inosine 5'-monophosphate) and GMP (guanosine 5'-monophosphate), with the release of PPi. The polypeptide is Hypoxanthine-guanine phosphoribosyltransferase (hpt) (Streptococcus agalactiae serotype III (strain NEM316)).